The chain runs to 88 residues: Small ribosomal subunit protein uS15 (88 aa).

Belongs to the universal ribosomal protein uS15 family. Part of the 30S ribosomal subunit. Forms a bridge to the 50S subunit in the 70S ribosome, contacting the 23S rRNA.

Functionally, one of the primary rRNA binding proteins, it binds directly to 16S rRNA where it helps nucleate assembly of the platform of the 30S subunit by binding and bridging several RNA helices of the 16S rRNA. Forms an intersubunit bridge (bridge B4) with the 23S rRNA of the 50S subunit in the ribosome. The protein is Small ribosomal subunit protein uS15 of Mesoplasma florum (strain ATCC 33453 / NBRC 100688 / NCTC 11704 / L1) (Acholeplasma florum).